The sequence spans 307 residues: Oxygen-dependent coproporphyrinogen-III oxidase (307 aa).

A substrate-binding site is contributed by S99. H103 and H113 together coordinate a divalent metal cation. The Proton donor role is filled by H113. 115–117 (NVR) contributes to the substrate binding site. 2 residues coordinate a divalent metal cation: H152 and H182. The interval 247–282 (YVEFNLVFDRGTLFGLQSGGRTESILMSMPPVVNWR) is important for dimerization. 265-267 (GGR) contacts substrate.

It belongs to the aerobic coproporphyrinogen-III oxidase family. Homodimer. It depends on a divalent metal cation as a cofactor.

The protein localises to the cytoplasm. The catalysed reaction is coproporphyrinogen III + O2 + 2 H(+) = protoporphyrinogen IX + 2 CO2 + 2 H2O. The protein operates within porphyrin-containing compound metabolism; protoporphyrin-IX biosynthesis; protoporphyrinogen-IX from coproporphyrinogen-III (O2 route): step 1/1. Functionally, involved in the heme biosynthesis. Catalyzes the aerobic oxidative decarboxylation of propionate groups of rings A and B of coproporphyrinogen-III to yield the vinyl groups in protoporphyrinogen-IX. The polypeptide is Oxygen-dependent coproporphyrinogen-III oxidase (Paraburkholderia phytofirmans (strain DSM 17436 / LMG 22146 / PsJN) (Burkholderia phytofirmans)).